Here is a 200-residue protein sequence, read N- to C-terminus: Imidazoleglycerol-phosphate dehydratase (200 aa).

It belongs to the imidazoleglycerol-phosphate dehydratase family.

It localises to the cytoplasm. It catalyses the reaction D-erythro-1-(imidazol-4-yl)glycerol 3-phosphate = 3-(imidazol-4-yl)-2-oxopropyl phosphate + H2O. The protein operates within amino-acid biosynthesis; L-histidine biosynthesis; L-histidine from 5-phospho-alpha-D-ribose 1-diphosphate: step 6/9. The polypeptide is Imidazoleglycerol-phosphate dehydratase (Chlorobium phaeobacteroides (strain BS1)).